The following is a 590-amino-acid chain: Aspartate--tRNA(Asp/Asn) ligase (590 aa).

E175 is a binding site for L-aspartate. Residues 199–202 (QQYK) form an aspartate region. L-aspartate contacts are provided by R221 and H450. An ATP-binding site is contributed by 221–223 (RDE). E484 provides a ligand contact to ATP. R491 is a binding site for L-aspartate. 536–539 (GVDR) serves as a coordination point for ATP.

Belongs to the class-II aminoacyl-tRNA synthetase family. Type 1 subfamily. As to quaternary structure, homodimer.

The protein localises to the cytoplasm. It carries out the reaction tRNA(Asx) + L-aspartate + ATP = L-aspartyl-tRNA(Asx) + AMP + diphosphate. In terms of biological role, aspartyl-tRNA synthetase with relaxed tRNA specificity since it is able to aspartylate not only its cognate tRNA(Asp) but also tRNA(Asn). Reaction proceeds in two steps: L-aspartate is first activated by ATP to form Asp-AMP and then transferred to the acceptor end of tRNA(Asp/Asn). This chain is Aspartate--tRNA(Asp/Asn) ligase, found in Bradyrhizobium sp. (strain ORS 278).